A 616-amino-acid chain; its full sequence is Dihydroxy-acid dehydratase (616 aa).

Asp-81 provides a ligand contact to Mg(2+). Cys-122 is a [2Fe-2S] cluster binding site. Residues Asp-123 and Lys-124 each coordinate Mg(2+). Position 124 is an N6-carboxylysine (Lys-124). Cys-195 is a [2Fe-2S] cluster binding site. Glu-491 provides a ligand contact to Mg(2+). The active-site Proton acceptor is Ser-517.

The protein belongs to the IlvD/Edd family. In terms of assembly, homodimer. Requires [2Fe-2S] cluster as cofactor. Mg(2+) is required as a cofactor.

It catalyses the reaction (2R)-2,3-dihydroxy-3-methylbutanoate = 3-methyl-2-oxobutanoate + H2O. The catalysed reaction is (2R,3R)-2,3-dihydroxy-3-methylpentanoate = (S)-3-methyl-2-oxopentanoate + H2O. It participates in amino-acid biosynthesis; L-isoleucine biosynthesis; L-isoleucine from 2-oxobutanoate: step 3/4. The protein operates within amino-acid biosynthesis; L-valine biosynthesis; L-valine from pyruvate: step 3/4. Functions in the biosynthesis of branched-chain amino acids. Catalyzes the dehydration of (2R,3R)-2,3-dihydroxy-3-methylpentanoate (2,3-dihydroxy-3-methylvalerate) into 2-oxo-3-methylpentanoate (2-oxo-3-methylvalerate) and of (2R)-2,3-dihydroxy-3-methylbutanoate (2,3-dihydroxyisovalerate) into 2-oxo-3-methylbutanoate (2-oxoisovalerate), the penultimate precursor to L-isoleucine and L-valine, respectively. This is Dihydroxy-acid dehydratase from Shewanella loihica (strain ATCC BAA-1088 / PV-4).